Reading from the N-terminus, the 526-residue chain is Cytochrome P450 monooxygenase BOT4 (526 aa).

N5 is a glycosylation site (N-linked (GlcNAc...) asparagine). A helical membrane pass occupies residues 41–61; that stretch reads CLVAIILCRFIAVWSYNLWFH. N-linked (GlcNAc...) asparagine glycans are attached at residues N205 and N281. C464 serves as a coordination point for heme.

This sequence belongs to the cytochrome P450 family. The cofactor is heme.

The protein resides in the membrane. It functions in the pathway secondary metabolite biosynthesis. Cytochrome P450 monooxygenase; part of the gene cluster that mediates the biosynthesis of botrydial. Botrydial is necessary for colonization of plant tissue by the T4 strain. It is a strain-dependent virulence factor since highly aggressive strains like SAS56 or B05 still retain substantial virulence when botrydial synthesis is impaired, since they produce also botcinic acid. The first step of botrydial biosynthesis is performed by the sesquiterpene synthase BOT2 which catalyzes the cyclization of farnesyl diphosphate (FPP) to presilphiperfolan-8-beta-ol (PSP). The cytochrome P450 monooxygenase BOT4 then catalyzes the hydroxylation at C-4 to give a probotryane intermediate. Acetylation of the hydroxyl at C-4 is carried out by the acetyltransferase BOT5, followed by the combined action of the P450 monooxygenases BOT3 and BOT1, to yield finally the glycol, via the regio- and stereospecific hydroxylations at C-10 and C-15 of the probotryane intermediates, respectively. The cleavage of the C10-C15 bond of probotryane skeleton is an intriguing and chemically important reaction, which could be mediated by some of the monooxygenases or by a combination of them. It is possible that either BOT3 or BOT1 would oxidize either the 10- or the 15-hydroxy group to the hydroperoxide derivative, which would then undergo heterolytic fragmentation to give the dialdehyde botrydial. Finally, the dehydrogenase BOT7 might be involved in the conversion of botrydial to dihydrobotrydial. This Botryotinia fuckeliana (Noble rot fungus) protein is Cytochrome P450 monooxygenase BOT4.